Reading from the N-terminus, the 200-residue chain is MIRLLSLVLFFCLSAASQASEKLLVLGDSLSAGYQMPIEKSWPSLLPDALLEHGQDVTVINGSISGDTTGNGLARLPQLLDQHTPDLVLIELGANDGLRGFPPKVITSNLSKMISLIKDSGANVVMMQIRVPPNYGKRYSDMFYDIYPKLAEHQQVQLMPFFLEHVITKPEWMMDDGLHPKPEAQPWIAEFVAQELVKHL.

Residues 1 to 19 (MIRLLSLVLFFCLSAASQA) form the signal peptide. S29 functions as the Nucleophile in the catalytic mechanism. Residues D176 and H179 contribute to the active site.

The protein belongs to the 'GDSL' lipolytic enzyme family. As to quaternary structure, homodimer.

The enzyme catalyses a phenyl acetate + H2O = a phenol + acetate + H(+). Its function is as follows. Favors the hydrolysis of several arylesters. The sequence is that of Arylesterase from Vibrio mimicus.